Consider the following 400-residue polypeptide: Nicotinate phosphoribosyltransferase (400 aa).

Position 220 is a phosphohistidine; by autocatalysis (histidine 220).

The protein belongs to the NAPRTase family. Post-translationally, transiently phosphorylated on a His residue during the reaction cycle. Phosphorylation strongly increases the affinity for substrates and increases the rate of nicotinate D-ribonucleotide production. Dephosphorylation regenerates the low-affinity form of the enzyme, leading to product release.

It catalyses the reaction nicotinate + 5-phospho-alpha-D-ribose 1-diphosphate + ATP + H2O = nicotinate beta-D-ribonucleotide + ADP + phosphate + diphosphate. It functions in the pathway cofactor biosynthesis; NAD(+) biosynthesis; nicotinate D-ribonucleotide from nicotinate: step 1/1. Catalyzes the synthesis of beta-nicotinate D-ribonucleotide from nicotinate and 5-phospho-D-ribose 1-phosphate at the expense of ATP. The sequence is that of Nicotinate phosphoribosyltransferase from Escherichia coli O45:K1 (strain S88 / ExPEC).